A 122-amino-acid chain; its full sequence is Large ribosomal subunit protein uL14 (122 aa).

This sequence belongs to the universal ribosomal protein uL14 family. As to quaternary structure, part of the 50S ribosomal subunit. Forms a cluster with proteins L3 and L19. In the 70S ribosome, L14 and L19 interact and together make contacts with the 16S rRNA in bridges B5 and B8.

Its function is as follows. Binds to 23S rRNA. Forms part of two intersubunit bridges in the 70S ribosome. The polypeptide is Large ribosomal subunit protein uL14 (Flavobacterium johnsoniae (strain ATCC 17061 / DSM 2064 / JCM 8514 / BCRC 14874 / CCUG 350202 / NBRC 14942 / NCIMB 11054 / UW101) (Cytophaga johnsonae)).